Consider the following 556-residue polypeptide: MMFCYQCEQTTRSPAGIGCTSEPGTCGKDEATAVLQDILTHLMKGIASMRAGRAMGVADRRTDDFIFYGLFTTLTNVNFTATRFVHLIQEASKRRERIKLLYEEAAREQGKTPEILSGPALFQPADSLEQLLRQAPSVAINADVEHLGSDVIGARALILYGMKGVALIAQHARVLGYQSDEVMPQAEEILDYLASNPTDLDEMLEESLEVGRLNLKVMELLDVANTDSFGAQEITSVRISPIQGKAILVSGHDLHDLKQILEQTKDQGINVYTHGEMLPANAYPLLKAYPHLAGNLGGAWQDQQREFADFPGPIVMTSNCIIEPGRSYKNRIFTLGPVGWPGVRHIDNGDFTPVIQAAKALPGFTADAKEQRITIGFGHHTLLGVADKIVDAVKHGDIRHFFLVGGCDGVSPARNYFTEVADNAPADSVVMTLGCGKYRFNKHEFGDIGGIPRLLDIGQCNDAHSAIRVAGALAEAFNCGVNDLPLSIMLSWFEQKATAIHLSLLALGIKGIKLGPTLPAYLTPTLVQKLQSRFDLDLDLIGEAQADLQAALAHTA.

[4Fe-4S] cluster-binding residues include C4, C7, C19, and C26. Residues H252, E276, C320, C407, C435, C460, E494, and K496 each contribute to the hybrid [4Fe-2O-2S] cluster site. The residue at position 407 (C407) is a Cysteine persulfide.

It belongs to the HCP family. [4Fe-4S] cluster is required as a cofactor. The cofactor is hybrid [4Fe-2O-2S] cluster.

The protein resides in the cytoplasm. It catalyses the reaction A + NH4(+) + H2O = hydroxylamine + AH2 + H(+). In terms of biological role, catalyzes the reduction of hydroxylamine to form NH(3) and H(2)O. The sequence is that of Hydroxylamine reductase from Acidithiobacillus ferridurans.